The following is a 637-amino-acid chain: MTEYVAGKYDVIVIGAGHAGCEAALASARLGAKTLILTISWDNVALMPCNPAIGGPAKGHLVREIDALGGQMGLTIDKTCIQIRLLNTGKGPAVHALRAQADKKRYQREMIRVLEHQENLDVRQAMVESVVVEQGRVRGIRTNTGAFFAAPALVITTGTYLRGRIIIGDLHYPGGPNGYFPSVALAASLRDIGVRLGRFKTGTPARVDGRTVDFSQMVEQPGDREPLNFSFLSPRIERKQISCWLTYTTEETHQIIRDNLHRSPLYAGVIEGTGPRYCPSIEDKVVRFADKKSHQVFIEPEGEGTHEMYVQGMSTSLPEDVQVTMLRSIIGMKDVKIIRPGYAIEYDYVDPTQLRLSLEHQEIGGLFTAGQINGTSGYEEAAAQGLMAGINAARFVKGEEPLVLKRSDAYIGVLIDDLVTKGTNEPYRMLTSRAEYRLLLRQDNADQRLTEIGRSIGLVDDRRYRRFREKMQLLEQEVVRWKSSFVTPGNKKIQAILDEKKSAPLTKGVSLYDLLRRPELTYDDLIPLCNDGEKDLPIDPEVAEQVEISAKFEGYLVKQQAQVDRFNKLENKRLPADLDYKRVHGLSNEGRQKLIARKPVSIGQASRISGVSPADISILLVYLEQQRRLAPGEGGVD.

FAD-binding positions include 15-20, Val127, and Ser182; that span reads GAGHAG. Residue 274–288 coordinates NAD(+); sequence GPRYCPSIEDKVVRF. Position 371 (Gln371) interacts with FAD.

The protein belongs to the MnmG family. As to quaternary structure, homodimer. Heterotetramer of two MnmE and two MnmG subunits. FAD serves as cofactor.

Its subcellular location is the cytoplasm. Its function is as follows. NAD-binding protein involved in the addition of a carboxymethylaminomethyl (cmnm) group at the wobble position (U34) of certain tRNAs, forming tRNA-cmnm(5)s(2)U34. The chain is tRNA uridine 5-carboxymethylaminomethyl modification enzyme MnmG from Heliobacterium modesticaldum (strain ATCC 51547 / Ice1).